The sequence spans 181 residues: Adenylyl-sulfate kinase (181 aa).

20–27 is a binding site for ATP; the sequence is GLSGAGKS. The Phosphoserine intermediate role is filled by Ser-94.

The protein belongs to the APS kinase family.

It catalyses the reaction adenosine 5'-phosphosulfate + ATP = 3'-phosphoadenylyl sulfate + ADP + H(+). The protein operates within sulfur metabolism; hydrogen sulfide biosynthesis; sulfite from sulfate: step 2/3. Its function is as follows. Catalyzes the synthesis of activated sulfate. In Deinococcus deserti (strain DSM 17065 / CIP 109153 / LMG 22923 / VCD115), this protein is Adenylyl-sulfate kinase.